A 444-amino-acid chain; its full sequence is Proline--tRNA ligase (444 aa).

Belongs to the class-II aminoacyl-tRNA synthetase family. ProS type 2 subfamily. As to quaternary structure, homodimer.

The protein localises to the cytoplasm. The catalysed reaction is tRNA(Pro) + L-proline + ATP = L-prolyl-tRNA(Pro) + AMP + diphosphate. In terms of biological role, catalyzes the attachment of proline to tRNA(Pro) in a two-step reaction: proline is first activated by ATP to form Pro-AMP and then transferred to the acceptor end of tRNA(Pro). The sequence is that of Proline--tRNA ligase from Pelagibacter ubique (strain HTCC1062).